The chain runs to 426 residues: MAKQKALQAIRGMNDCLPSETNIWQMVETVLRRVASNYGFAEIRMPIVESTALFKRGIGEVTDIVEKEMYTFDDLNGDSLTLRPEGTASCVRAGNQHGLLYNQEQRLWYMGPMFRHERPQKGRYRQFHQFGLEAFGIATPDIDAEIILLTSRLWRELGINEFVTLELNSLGSNEERANYREALIAYLLEHEELLDEDSKRRMHTNPLRVLDSKNPQVQEALTNAPKLSDHFGEETQTHFDTLCARLDAAGINYVLNERLVRGLDYYNRTVFEWVTTTLGAQGTICAGGRYDGLVEQLGGKATPAFGFALGIERLVLMLTELEKVTNIRPQVDAYVVILGDDAQVAANKLAEQWRDQVPEIRLQCHCGGGNMKKQLKRADKSGAQIALILGDDEITQEKVMVKYLRGQKEQESIEFTQVSSLLSELI.

It belongs to the class-II aminoacyl-tRNA synthetase family. Homodimer.

The protein resides in the cytoplasm. It catalyses the reaction tRNA(His) + L-histidine + ATP = L-histidyl-tRNA(His) + AMP + diphosphate + H(+). The sequence is that of Histidine--tRNA ligase from Colwellia psychrerythraea (strain 34H / ATCC BAA-681) (Vibrio psychroerythus).